A 220-amino-acid polypeptide reads, in one-letter code: Non-structural protein 3 (220 aa).

A CoV 3a-like viroporin TM domain is found at 17 to 116 (TVSPSVDEPT…KLRSMAPFMS (100 aa)). Transmembrane regions (helical) follow at residues 27 to 47 (VDNN…LYYL), 56 to 76 (SMLF…WLIF), and 80 to 100 (FYVS…CFLE). Residues 120–200 (NFAIIKTTCN…TVFIYINSVI (81 aa)) form the CoV 3a-like viroporin CD domain.

Its subcellular location is the host membrane. This is Non-structural protein 3 from Bat coronavirus HKU9 (BtCoV).